A 188-amino-acid chain; its full sequence is NAD(P)H-quinone oxidoreductase subunit 6, chloroplastic (188 aa).

The next 5 helical transmembrane spans lie at 10 to 30, 32 to 52, 61 to 81, 97 to 117, and 153 to 173; these read GILL…ILLN, IVQS…LYLV, AQVL…VMLI, GNNI…SIIL, and FLLP…GAIT.

Belongs to the complex I subunit 6 family. In terms of assembly, NDH is composed of at least 16 different subunits, 5 of which are encoded in the nucleus.

It is found in the plastid. It localises to the chloroplast thylakoid membrane. The enzyme catalyses a plastoquinone + NADH + (n+1) H(+)(in) = a plastoquinol + NAD(+) + n H(+)(out). The catalysed reaction is a plastoquinone + NADPH + (n+1) H(+)(in) = a plastoquinol + NADP(+) + n H(+)(out). NDH shuttles electrons from NAD(P)H:plastoquinone, via FMN and iron-sulfur (Fe-S) centers, to quinones in the photosynthetic chain and possibly in a chloroplast respiratory chain. The immediate electron acceptor for the enzyme in this species is believed to be plastoquinone. Couples the redox reaction to proton translocation, and thus conserves the redox energy in a proton gradient. In Psilotum nudum (Whisk fern), this protein is NAD(P)H-quinone oxidoreductase subunit 6, chloroplastic (ndhG).